The sequence spans 268 residues: Imidazole glycerol phosphate synthase subunit HisF (268 aa).

Catalysis depends on residues Asp12 and Asp131.

This sequence belongs to the HisA/HisF family. Heterodimer of HisH and HisF.

It localises to the cytoplasm. The catalysed reaction is 5-[(5-phospho-1-deoxy-D-ribulos-1-ylimino)methylamino]-1-(5-phospho-beta-D-ribosyl)imidazole-4-carboxamide + L-glutamine = D-erythro-1-(imidazol-4-yl)glycerol 3-phosphate + 5-amino-1-(5-phospho-beta-D-ribosyl)imidazole-4-carboxamide + L-glutamate + H(+). The protein operates within amino-acid biosynthesis; L-histidine biosynthesis; L-histidine from 5-phospho-alpha-D-ribose 1-diphosphate: step 5/9. IGPS catalyzes the conversion of PRFAR and glutamine to IGP, AICAR and glutamate. The HisF subunit catalyzes the cyclization activity that produces IGP and AICAR from PRFAR using the ammonia provided by the HisH subunit. The chain is Imidazole glycerol phosphate synthase subunit HisF from Methanoregula boonei (strain DSM 21154 / JCM 14090 / 6A8).